A 118-amino-acid polypeptide reads, in one-letter code: Large ribosomal subunit protein uL22 (118 aa).

It belongs to the universal ribosomal protein uL22 family. As to quaternary structure, part of the 50S ribosomal subunit.

Functionally, this protein binds specifically to 23S rRNA; its binding is stimulated by other ribosomal proteins, e.g. L4, L17, and L20. It is important during the early stages of 50S assembly. It makes multiple contacts with different domains of the 23S rRNA in the assembled 50S subunit and ribosome. Its function is as follows. The globular domain of the protein is located near the polypeptide exit tunnel on the outside of the subunit, while an extended beta-hairpin is found that lines the wall of the exit tunnel in the center of the 70S ribosome. The protein is Large ribosomal subunit protein uL22 of Treponema denticola (strain ATCC 35405 / DSM 14222 / CIP 103919 / JCM 8153 / KCTC 15104).